A 500-amino-acid chain; its full sequence is Lysine--tRNA ligase (500 aa).

Mg(2+) is bound by residues Asp412 and Glu419.

It belongs to the class-II aminoacyl-tRNA synthetase family. In terms of assembly, homodimer. It depends on Mg(2+) as a cofactor.

It localises to the cytoplasm. The enzyme catalyses tRNA(Lys) + L-lysine + ATP = L-lysyl-tRNA(Lys) + AMP + diphosphate. This is Lysine--tRNA ligase from Kineococcus radiotolerans (strain ATCC BAA-149 / DSM 14245 / SRS30216).